The primary structure comprises 188 residues: MTKLIIISAPSGTGKSTVIERLLTDRELNLHFSISATSRAPRGEEQNGREYYFLSPEEFRRRIEANEFVEYEEVYRDKYYGTLKSEVERILKEEKNVIFDVDVVGAQSIKKYYGDRALAIFILPPSIEELRSRLQKRGTDSMETIKQRVDKAEKEIGYAHLFDLRFVNDDLVTCVEQIRKAIAQFIAK.

Residues 2 to 183 enclose the Guanylate kinase-like domain; the sequence is TKLIIISAPS…CVEQIRKAIA (182 aa). Position 9-16 (9-16) interacts with ATP; that stretch reads APSGTGKS.

Belongs to the guanylate kinase family.

Its subcellular location is the cytoplasm. It carries out the reaction GMP + ATP = GDP + ADP. Its function is as follows. Essential for recycling GMP and indirectly, cGMP. The polypeptide is Guanylate kinase (Porphyromonas gingivalis (strain ATCC BAA-308 / W83)).